The following is a 220-amino-acid chain: Nicotinamidase (220 aa).

D11 is an active-site residue. Zn(2+) is bound by residues D53, H55, and H94. K119 is a catalytic residue. C163 serves as the catalytic Nucleophile.

Belongs to the isochorismatase family.

The protein localises to the cytoplasm. The protein resides in the nucleus. It localises to the peroxisome. It carries out the reaction nicotinamide + H2O = nicotinate + NH4(+). Its pathway is cofactor biosynthesis; nicotinate biosynthesis; nicotinate from nicotinamide: step 1/1. Catalyzes the deamidation of nicotinamide, an early step in the NAD(+) salvage pathway. The chain is Nicotinamidase (pnc1) from Schizosaccharomyces pombe (strain 972 / ATCC 24843) (Fission yeast).